The following is a 297-amino-acid chain: Ketohexokinase (297 aa).

Beta-D-fructose-binding residues include aspartate 15, glycine 41, asparagine 42, and asparagine 45. ATP-binding positions include arginine 107, 225-228 (AEEG), and 254-257 (GAGD). Aspartate 257 contacts beta-D-fructose.

Belongs to the carbohydrate kinase PfkB family. As to quaternary structure, homodimer.

The enzyme catalyses beta-D-fructose + ATP = beta-D-fructose 1-phosphate + ADP + H(+). The protein operates within carbohydrate metabolism; fructose metabolism. With respect to regulation, requires potassium. Inhibition by ADP. Catalyzes the phosphorylation of the ketose sugar fructose to fructose-1-phosphate. The chain is Ketohexokinase (KHK) from Pongo abelii (Sumatran orangutan).